We begin with the raw amino-acid sequence, 362 residues long: MGTEATEQVSWGHYSGDEEDAYSAEPLPELCYKADVQAFSRAFQPSVSLTVAALGLAGNGLVLATHLAARRAARSPTSAHLLQLALADLLLALTLPFAAAGALQGWSLGSATCRTISGLYSASFHAGFLFLACISADRYVAIARALPAGPRPSTPGRAHLVSVIVWLLSLLLALPALLFSQDGQREGQRRCRLIFPEGLTQTVKGASAVAQVALGFALPLGVMVACYALLGRTLLAARGPERRRALRVVVALVAAFVVLQLPYSLALLLDTADLLAARERSCPASKRKDVALLVTSGLALARCGLNPVLYAFLGLRFRQDLRRLLRGGSCPSGPQPRRGCPRRPRLSSCSAPTETHSLSWDN.

The Extracellular segment spans residues 1 to 52 (MGTEATEQVSWGHYSGDEEDAYSAEPLPELCYKADVQAFSRAFQPSVSLTVA). A helical membrane pass occupies residues 53–68 (ALGLAGNGLVLATHLA). Residues 69–78 (ARRAARSPTS) lie on the Cytoplasmic side of the membrane. The chain crosses the membrane as a helical span at residues 79-99 (AHLLQLALADLLLALTLPFAA). Topologically, residues 100–114 (AGALQGWSLGSATCR) are extracellular. A disulfide bridge links cysteine 113 with cysteine 191. Residues 115–136 (TISGLYSASFHAGFLFLACISA) traverse the membrane as a helical segment. The Cytoplasmic segment spans residues 137–159 (DRYVAIARALPAGPRPSTPGRAH). A helical membrane pass occupies residues 160 to 179 (LVSVIVWLLSLLLALPALLF). Residues 180–203 (SQDGQREGQRRCRLIFPEGLTQTV) are Extracellular-facing. The chain crosses the membrane as a helical span at residues 204–225 (KGASAVAQVALGFALPLGVMVA). At 226-247 (CYALLGRTLLAARGPERRRALR) the chain is on the cytoplasmic side. Residues 248–269 (VVVALVAAFVVLQLPYSLALLL) traverse the membrane as a helical segment. At 270 to 290 (DTADLLAARERSCPASKRKDV) the chain is on the extracellular side. Residues 291–313 (ALLVTSGLALARCGLNPVLYAFL) traverse the membrane as a helical segment. Residues 314–362 (GLRFRQDLRRLLRGGSCPSGPQPRRGCPRRPRLSSCSAPTETHSLSWDN) lie on the Cytoplasmic side of the membrane. Over residues 328 to 338 (GSCPSGPQPRR) the composition is skewed to low complexity. The interval 328 to 362 (GSCPSGPQPRRGCPRRPRLSSCSAPTETHSLSWDN) is disordered. Positions 351-362 (APTETHSLSWDN) are enriched in polar residues.

It belongs to the G-protein coupled receptor 1 family. As to expression, expressed at high levels in adult testis, small intestine, fetal lung, fetal kidney. Weaker expression was observed in many other adult tissues including spleen, thymus, lymph node, Peyer patches, colon, heart, ovary, peripheral blood lymphocytes, thyroid and spinal cord. Also expressed by melanocytes, dermal fibroblasts, dermal microvascular endothelial cells. Also detected in T-cells and in skin-derived Langerhans cells.

Its subcellular location is the cell membrane. Receptor for chemokines SCYA27 and SCYA28. Subsequently transduces a signal by increasing the intracellular calcium ions level and stimulates chemotaxis in a pre-B cell line. This Homo sapiens (Human) protein is C-C chemokine receptor type 10 (CCR10).